Reading from the N-terminus, the 132-residue chain is uncharacterized protein (132 aa).

A helical membrane pass occupies residues 10 to 30; sequence LVLFFTIILIALCPFVYYLWD. Positions 50-79 form a coiled coil; it reads KNCSTEIEHAIEEHKRKNKEKKEAKEKRLA.

It localises to the membrane. This is an uncharacterized protein from Invertebrate iridescent virus 6 (IIV-6).